The following is a 538-amino-acid chain: (R)-citramalate synthase (538 aa).

Residues 3-268 (IKVYDTTLRD…IPKENLKKLF (266 aa)) enclose the Pyruvate carboxyltransferase domain.

The protein belongs to the alpha-IPM synthase/homocitrate synthase family.

It catalyses the reaction pyruvate + acetyl-CoA + H2O = (3R)-citramalate + CoA + H(+). It participates in amino-acid biosynthesis; L-isoleucine biosynthesis; 2-oxobutanoate from pyruvate: step 1/3. Functionally, catalyzes the condensation of pyruvate and acetyl-coenzyme A to form (R)-citramalate. This Thermotoga maritima (strain ATCC 43589 / DSM 3109 / JCM 10099 / NBRC 100826 / MSB8) protein is (R)-citramalate synthase.